A 416-amino-acid polypeptide reads, in one-letter code: D-amino acid dehydrogenase (416 aa).

3–17 (ITILGSGVIGVTTAY) serves as a coordination point for FAD.

The protein belongs to the DadA oxidoreductase family. It depends on FAD as a cofactor.

It catalyses the reaction a D-alpha-amino acid + A + H2O = a 2-oxocarboxylate + AH2 + NH4(+). Functionally, oxidative deamination of D-amino acids. This Brucella suis biovar 1 (strain 1330) protein is D-amino acid dehydrogenase.